The sequence spans 179 residues: Large ribosomal subunit protein uL6 (179 aa).

It belongs to the universal ribosomal protein uL6 family. As to quaternary structure, part of the 50S ribosomal subunit.

Functionally, this protein binds to the 23S rRNA, and is important in its secondary structure. It is located near the subunit interface in the base of the L7/L12 stalk, and near the tRNA binding site of the peptidyltransferase center. This chain is Large ribosomal subunit protein uL6, found in Leptospira interrogans serogroup Icterohaemorrhagiae serovar copenhageni (strain Fiocruz L1-130).